Reading from the N-terminus, the 572-residue chain is Arginine--tRNA ligase (572 aa).

The 'HIGH' region signature appears at 122–132 (PNLAKEMHVGH).

Belongs to the class-I aminoacyl-tRNA synthetase family. As to quaternary structure, monomer.

The protein localises to the cytoplasm. It carries out the reaction tRNA(Arg) + L-arginine + ATP = L-arginyl-tRNA(Arg) + AMP + diphosphate. This is Arginine--tRNA ligase from Neisseria meningitidis serogroup C / serotype 2a (strain ATCC 700532 / DSM 15464 / FAM18).